An 896-amino-acid chain; its full sequence is Translation initiation factor IF-2 (896 aa).

The disordered stretch occupies residues 1–260 (MDIENTNKPD…AQTNKKAHKA (260 aa)). Basic and acidic residues predominate over residues 19 to 34 (KAADSKPESGKTDSKR). Residues 56-66 (EESSGGKASGK) show a composition bias toward low complexity. The span at 85–136 (SVKEKKPDERLEETKKTAPRFEDKKSDAPSAQNEKRSFDSAKKEEKQTERKK) shows a compositional bias: basic and acidic residues. Residues 168-177 (RGQGNRPQRP) show a composition bias toward low complexity. Residues 375–544 (PRPPVVTIMG…LLQAEVLELK (170 aa)) form the tr-type G domain. The tract at residues 384-391 (GHVDHGKT) is G1. GTP is bound at residue 384–391 (GHVDHGKT). The segment at 409–413 (GITQH) is G2. Residues 430 to 433 (DTPG) form a G3 region. Residues 430–434 (DTPGH) and 484–487 (NKVD) each bind GTP. A G4 region spans residues 484–487 (NKVD). The interval 520-522 (SAL) is G5. Residues 877 to 896 (SDSEKYKAPEIKEEGTETDE) are disordered.

The protein belongs to the TRAFAC class translation factor GTPase superfamily. Classic translation factor GTPase family. IF-2 subfamily.

The protein localises to the cytoplasm. In terms of biological role, one of the essential components for the initiation of protein synthesis. Protects formylmethionyl-tRNA from spontaneous hydrolysis and promotes its binding to the 30S ribosomal subunits. Also involved in the hydrolysis of GTP during the formation of the 70S ribosomal complex. The protein is Translation initiation factor IF-2 of Treponema denticola (strain ATCC 35405 / DSM 14222 / CIP 103919 / JCM 8153 / KCTC 15104).